The sequence spans 382 residues: 1-deoxy-D-xylulose 5-phosphate reductoisomerase (382 aa).

Residues T10, G11, S12, I13, N38, and N120 each coordinate NADPH. K121 serves as a coordination point for 1-deoxy-D-xylulose 5-phosphate. E122 is a binding site for NADPH. Residue D146 coordinates Mn(2+). 1-deoxy-D-xylulose 5-phosphate-binding residues include S147, E148, S172, and H195. E148 provides a ligand contact to Mn(2+). G201 provides a ligand contact to NADPH. 1-deoxy-D-xylulose 5-phosphate contacts are provided by S208, N213, K214, and E217. Position 217 (E217) interacts with Mn(2+).

It belongs to the DXR family. Requires Mg(2+) as cofactor. Mn(2+) serves as cofactor.

The enzyme catalyses 2-C-methyl-D-erythritol 4-phosphate + NADP(+) = 1-deoxy-D-xylulose 5-phosphate + NADPH + H(+). Its pathway is isoprenoid biosynthesis; isopentenyl diphosphate biosynthesis via DXP pathway; isopentenyl diphosphate from 1-deoxy-D-xylulose 5-phosphate: step 1/6. Catalyzes the NADPH-dependent rearrangement and reduction of 1-deoxy-D-xylulose-5-phosphate (DXP) to 2-C-methyl-D-erythritol 4-phosphate (MEP). The chain is 1-deoxy-D-xylulose 5-phosphate reductoisomerase from Caldanaerobacter subterraneus subsp. tengcongensis (strain DSM 15242 / JCM 11007 / NBRC 100824 / MB4) (Thermoanaerobacter tengcongensis).